Here is a 258-residue protein sequence, read N- to C-terminus: Uridylate cyclase (258 aa).

The Guanylate cyclase domain occupies 50 to 190; that stretch reads AAIFIDLRGS…DVVNKASKMC (141 aa). Phenylalanine 53 serves as a coordination point for a ribonucleoside 5'-triphosphate. 2 residues coordinate Mn(2+): aspartate 55 and aspartate 102.

This sequence belongs to the adenylyl cyclase class-4/guanylyl cyclase family. Pyrimidine cyclase subfamily. Homodimer. Mn(2+) is required as a cofactor.

It localises to the cytoplasm. The catalysed reaction is UTP = 3',5'-cyclic UMP + diphosphate. Its function is as follows. Pycsar (pyrimidine cyclase system for antiphage resistance) provides immunity against bacteriophage. The pyrimidine cyclase (PycC) synthesizes cyclic nucleotides in response to infection; these serve as specific second messenger signals. The signals activate the adjacent effector, leading to bacterial cell death and abortive phage infection. A clade C Pycsar system. Functionally, the pyrimidine cyclase gene of a two-gene Pycsar system, weakly generates cyclic UMP (cUMP) from UTP, has little to no activity on ATP, CTP or GTP. Expression of this and adjacent effector GmPycTM (AC P0DV43) probably confers resistance to bacteriophage. The genes are probably only expressed in response to bacteriophage infection. The polypeptide is Uridylate cyclase (Gulbenkiania mobilis).